A 401-amino-acid polypeptide reads, in one-letter code: Elongation factor Tu 2 (401 aa).

In terms of domain architecture, tr-type G spans 10–209; that stretch reads KPHVNVGTIG…AVDEYIPTPV (200 aa). The G1 stretch occupies residues 19 to 26; that stretch reads GHVDHGKT. 19–26 contacts GTP; the sequence is GHVDHGKT. Threonine 26 contributes to the Mg(2+) binding site. The interval 60–64 is G2; it reads GITIA. The segment at 81–84 is G3; sequence DCPG. GTP-binding positions include 81–85 and 136–139; these read DCPGH and NKVD. The interval 136–139 is G4; it reads NKVD. Residues 174–176 form a G5 region; it reads SAL.

Belongs to the TRAFAC class translation factor GTPase superfamily. Classic translation factor GTPase family. EF-Tu/EF-1A subfamily. As to quaternary structure, monomer.

The protein resides in the cytoplasm. The enzyme catalyses GTP + H2O = GDP + phosphate + H(+). Functionally, GTP hydrolase that promotes the GTP-dependent binding of aminoacyl-tRNA to the A-site of ribosomes during protein biosynthesis. This Roseiflexus sp. (strain RS-1) protein is Elongation factor Tu 2.